Reading from the N-terminus, the 237-residue chain is MSRASLDKRPDEVAAMFDDVAPKYDVTNDVLSMGQTRRWRRLVVDAVGAVPGQRVLDVAAGTGTSSEPYADAGLDVVALDFSLGMLKVGKRRRPDIDFIAGDATALPFADNSFDAVTISFGLRNVNEPKKALAEMLRVTKPGGKLVVAEFSHPTFGPFRTVYTEYLMRALPAIANRSSSNPSAYVYLAESIRAWPDQDNLAQWIADVGWSDVSYRNLNGGLVALHRAFKEGKLEAKP.

S-adenosyl-L-methionine is bound by residues Thr62, Asp80, 102–103 (DA), and Ser119.

Belongs to the class I-like SAM-binding methyltransferase superfamily. MenG/UbiE family.

The enzyme catalyses a 2-demethylmenaquinol + S-adenosyl-L-methionine = a menaquinol + S-adenosyl-L-homocysteine + H(+). It functions in the pathway quinol/quinone metabolism; menaquinone biosynthesis; menaquinol from 1,4-dihydroxy-2-naphthoate: step 2/2. Functionally, methyltransferase required for the conversion of demethylmenaquinol (DMKH2) to menaquinol (MKH2). In Renibacterium salmoninarum (strain ATCC 33209 / DSM 20767 / JCM 11484 / NBRC 15589 / NCIMB 2235), this protein is Demethylmenaquinone methyltransferase.